Here is a 279-residue protein sequence, read N- to C-terminus: Putative pyruvate, phosphate dikinase regulatory protein (279 aa).

152-159 (GVSRTSKS) contacts ADP.

Belongs to the pyruvate, phosphate/water dikinase regulatory protein family. PDRP subfamily.

It catalyses the reaction N(tele)-phospho-L-histidyl/L-threonyl-[pyruvate, phosphate dikinase] + ADP = N(tele)-phospho-L-histidyl/O-phospho-L-threonyl-[pyruvate, phosphate dikinase] + AMP + H(+). The enzyme catalyses N(tele)-phospho-L-histidyl/O-phospho-L-threonyl-[pyruvate, phosphate dikinase] + phosphate + H(+) = N(tele)-phospho-L-histidyl/L-threonyl-[pyruvate, phosphate dikinase] + diphosphate. Bifunctional serine/threonine kinase and phosphorylase involved in the regulation of the pyruvate, phosphate dikinase (PPDK) by catalyzing its phosphorylation/dephosphorylation. This Anaplasma marginale (strain St. Maries) protein is Putative pyruvate, phosphate dikinase regulatory protein.